Here is a 57-residue protein sequence, read N- to C-terminus: Large ribosomal subunit protein bL32c (57 aa).

This sequence belongs to the bacterial ribosomal protein bL32 family.

It is found in the plastid. Its subcellular location is the chloroplast. This is Large ribosomal subunit protein bL32c from Acorus calamus (Sweet flag).